The sequence spans 312 residues: tRNA dimethylallyltransferase (312 aa).

Residue 13–20 (GPTAVGKT) participates in ATP binding. 15-20 (TAVGKT) is a binding site for substrate. Interaction with substrate tRNA regions lie at residues 38–41 (DSVQ) and 163–167 (QRVVR).

The protein belongs to the IPP transferase family. As to quaternary structure, monomer. Requires Mg(2+) as cofactor.

The enzyme catalyses adenosine(37) in tRNA + dimethylallyl diphosphate = N(6)-dimethylallyladenosine(37) in tRNA + diphosphate. Its function is as follows. Catalyzes the transfer of a dimethylallyl group onto the adenine at position 37 in tRNAs that read codons beginning with uridine, leading to the formation of N6-(dimethylallyl)adenosine (i(6)A). In Exiguobacterium sibiricum (strain DSM 17290 / CCUG 55495 / CIP 109462 / JCM 13490 / 255-15), this protein is tRNA dimethylallyltransferase.